Reading from the N-terminus, the 1401-residue chain is Lysine-specific demethylase 6A (1401 aa).

The interval Met-1–Lys-1095 is interaction with SUPT6H. TPR repeat units follow at residues Ser-93–Tyr-126, Ala-130–Phe-163, His-170–Pro-199, Ala-205–Ser-238, Gly-250–Ser-283, Gly-284–Ser-317, Ala-318–His-351, and Ala-352–Ser-385. The span at Ala-437–Trp-449 shows a compositional bias: polar residues. Residues Ala-437–His-457 are disordered. Arg-519 is modified (omega-N-methylarginine). The tract at residues Thr-521–Gln-541 is disordered. Omega-N-methylarginine is present on Arg-549. Polar residues-rich tracts occupy residues Leu-624–Ala-652 and Leu-660–Ile-724. 5 disordered regions span residues Leu-624–Gly-746, Ala-758–Pro-778, Lys-810–Ser-864, Leu-914–Thr-940, and Phe-1043–Phe-1079. Phosphoserine is present on Ser-769. Positions Ser-814–Thr-833 are enriched in low complexity. Thr-827 carries the post-translational modification Phosphothreonine. Ser-829 carries the phosphoserine modification. A compositionally biased stretch (polar residues) spans Glu-834–His-848. The span at Cys-918–Leu-931 shows a compositional bias: pro residues. The span at Ser-1046–Ser-1063 shows a compositional bias: basic and acidic residues. In terms of domain architecture, JmjC spans Lys-1095–Trp-1258. The Fe cation site is built by His-1146, Glu-1148, and His-1226. Zn(2+) contacts are provided by Cys-1331, Cys-1334, Cys-1358, and Cys-1361.

It belongs to the UTX family. Interacts with TLE1. Component of the MLL2/3 complex (also named ASCOM complex), at least composed of KMT2D/MLL2 or KMT2C/MLL3, ASH2L, RBBP5, WDR5, NCOA6, DPY30, KDM6A (or KDM6B), PAXIP1/PTIP, PAGR1 and alpha- and beta-tubulin. Interacts with SUPT6H. Interacts with SMARCA4. Interacts with PROSER1. L-ascorbate is required as a cofactor. It depends on Fe(2+) as a cofactor.

The protein localises to the nucleus. It carries out the reaction N(6),N(6),N(6)-trimethyl-L-lysyl(27)-[histone H3] + 2 2-oxoglutarate + 2 O2 = N(6)-methyl-L-lysyl(27)-[histone H3] + 2 formaldehyde + 2 succinate + 2 CO2. Histone demethylase that specifically demethylates 'Lys-27' of histone H3, thereby playing a central role in histone code. Demethylates trimethylated and dimethylated but not monomethylated H3 'Lys-27'. Plays a central role in regulation of posterior development, by regulating HOX gene expression. Demethylation of 'Lys-27' of histone H3 is concomitant with methylation of 'Lys-4' of histone H3, and regulates the recruitment of the PRC1 complex and monoubiquitination of histone H2A. Plays a demethylase-independent role in chromatin remodeling to regulate T-box family member-dependent gene expression. In Homo sapiens (Human), this protein is Lysine-specific demethylase 6A (KDM6A).